Reading from the N-terminus, the 376-residue chain is Glucose-1-phosphate adenylyltransferase (376 aa).

Residues tyrosine 101, glycine 166, 181–182, and serine 192 each bind alpha-D-glucose 1-phosphate; that span reads EK.

It belongs to the bacterial/plant glucose-1-phosphate adenylyltransferase family. In terms of assembly, homotetramer.

The catalysed reaction is alpha-D-glucose 1-phosphate + ATP + H(+) = ADP-alpha-D-glucose + diphosphate. Its pathway is glycan biosynthesis; glycogen biosynthesis. In terms of biological role, involved in the biosynthesis of ADP-glucose, a building block required for the elongation reactions to produce glycogen. Catalyzes the reaction between ATP and alpha-D-glucose 1-phosphate (G1P) to produce pyrophosphate and ADP-Glc. This Bacillus cytotoxicus (strain DSM 22905 / CIP 110041 / 391-98 / NVH 391-98) protein is Glucose-1-phosphate adenylyltransferase.